The primary structure comprises 357 residues: UDP-N-acetylglucosamine--N-acetylmuramyl-(pentapeptide) pyrophosphoryl-undecaprenol N-acetylglucosamine transferase (357 aa).

Residues 12–14, Arg-166, Ser-196, and Gln-291 contribute to the UDP-N-acetyl-alpha-D-glucosamine site; that span reads TAG.

Belongs to the glycosyltransferase 28 family. MurG subfamily.

The protein localises to the cell membrane. It catalyses the reaction di-trans,octa-cis-undecaprenyl diphospho-N-acetyl-alpha-D-muramoyl-L-alanyl-D-glutamyl-meso-2,6-diaminopimeloyl-D-alanyl-D-alanine + UDP-N-acetyl-alpha-D-glucosamine = di-trans,octa-cis-undecaprenyl diphospho-[N-acetyl-alpha-D-glucosaminyl-(1-&gt;4)]-N-acetyl-alpha-D-muramoyl-L-alanyl-D-glutamyl-meso-2,6-diaminopimeloyl-D-alanyl-D-alanine + UDP + H(+). The protein operates within cell wall biogenesis; peptidoglycan biosynthesis. Its function is as follows. Cell wall formation. Catalyzes the transfer of a GlcNAc subunit on undecaprenyl-pyrophosphoryl-MurNAc-pentapeptide (lipid intermediate I) to form undecaprenyl-pyrophosphoryl-MurNAc-(pentapeptide)GlcNAc (lipid intermediate II). The protein is UDP-N-acetylglucosamine--N-acetylmuramyl-(pentapeptide) pyrophosphoryl-undecaprenol N-acetylglucosamine transferase of Geobacillus kaustophilus (strain HTA426).